The chain runs to 1210 residues: V-type proton ATPase 116 kDa subunit a 4 (1210 aa).

The Cytoplasmic portion of the chain corresponds to M1 to F715. Residues S259–P271 show a composition bias toward low complexity. A disordered region spans residues S259 to M292. A compositionally biased stretch (basic and acidic residues) spans P275–S291. The stretch at F339 to N405 forms a coiled coil. A helical membrane pass occupies residues A716–I736. Topologically, residues R737–Y760 are extracellular. Residues I761–A781 traverse the membrane as a helical segment. At K782–A855 the chain is on the cytoplasmic side. Residues S856–I876 form a helical membrane-spanning segment. Over H877–V892 the chain is Extracellular. Residues I893–F913 form a helical membrane-spanning segment. The Cytoplasmic segment spans residues S914 to T976. A helical membrane pass occupies residues I977 to V997. Residues R998 to P1127 are Extracellular-facing. N-linked (GlcNAc...) asparagine glycosylation is found at N1010, N1019, and N1118. The chain crosses the membrane as a helical span at residues V1128–M1148. At E1149–I1210 the chain is on the cytoplasmic side.

It belongs to the V-ATPase 116 kDa subunit family. V-ATPase is a heteromultimeric enzyme made up of two complexes: the ATP-hydrolytic V1 complex and the proton translocation V0 complex. The V1 complex consists of three catalytic AB heterodimers that form a heterohexamer, three peripheral stalks each consisting of EG heterodimers, one central rotor including subunits D and F, and the regulatory subunits C and H. The proton translocation complex V0 consists of the proton transport subunit a, a ring of proteolipid subunits c9c'', rotary subunit d, subunits e and f, and the accessory subunits vah-19/Ac45 and vah-20/PRR. As to expression, expressed in uterus.

Its subcellular location is the membrane. Its function is as follows. Subunit of the V0 complex of vacuolar(H+)-ATPase (V-ATPase), a multisubunit enzyme composed of a peripheral complex (V1) that hydrolyzes ATP and a membrane integral complex (V0) that translocates protons. V-ATPase is responsible for acidifying and maintaining the pH of intracellular compartments and in some cell types, is targeted to the plasma membrane, where it is responsible for acidifying the extracellular environment. This chain is V-type proton ATPase 116 kDa subunit a 4, found in Caenorhabditis elegans.